The following is an 858-amino-acid chain: MFIFQLKISLFMSDFEQHSLDESKISPMMMQWHACKKMAGDAILFFRMGDFYEAFYEDAHLLSKELELTLTKRQEIPMSGIPFHTSEGYIDKLVAKGFRVAIAEQIEDPKKTKGLVKREVVRVVSPGTVINSSLLSDKNNNFFAALVKVGQIFGLAFLDLTTGEYWVSEFTQERELLNELYRLHPAEFLTSEKFKEKHASLFEEMQQTYSFLVNTLEDWQFEHQQAHDFLINHFKVQRLDGFGLSGMVAAINAAGALLNYLQETLCLPIQHIQSIRCYSSSQFMMLDRMTQRNLELTHSLQDGSRRHTLLGVIDQTQTPMGARLMHHWVKQPLLKVSEIHQRQNGIQALLNHEHIVDQLQNLFLQIKDIERLMMKVSACYATPRDLIALHFSFKPIAFIKSLLLNIPSEWINEHAQKLDPLSKMNALISNAIVEEPPLRLGEGKTFRQGFHRELDELREISHDSKAWMARYQTQIREETGIKTLKVGFNKMFGYFIEVSRGQIDKMPDHFIRRQTLVNAERYITPELKEYESKVLTAEERINSIESELFHQLRLEVASYTKNVLEVAQALAKIDCLISLTNVAKKYCYTCPVIDDSSILVIEEGRHPVIETVCRHEKFIPNDTYLDDQANRLLLITGPNMAGKSTYLRQVALIVILAQIGSFVPAAKAHIGIIDKVFTRIGASDDLSRGQSTFMVEMTETANILNNATSQSLVILDEIGRGTSTYDGISIAWSVAEYLLTTEKRMAKTLFATHYWELTKLEEKVPGAVNYNVAVHEADDHITFLRKIIKGGTDKSYGIHVARLAGLPQAVLNRSKEILEHLEENANRKSAFEPTRSKKSMVSKVKVPSTDFQLNLFQS.

An ATP-binding site is contributed by 637 to 644 (GPNMAGKS).

The protein belongs to the DNA mismatch repair MutS family.

This protein is involved in the repair of mismatches in DNA. It is possible that it carries out the mismatch recognition step. This protein has a weak ATPase activity. In Protochlamydia amoebophila (strain UWE25), this protein is DNA mismatch repair protein MutS.